Consider the following 142-residue polypeptide: Large ribosomal subunit protein uL11 (142 aa).

The protein belongs to the universal ribosomal protein uL11 family. In terms of assembly, part of the ribosomal stalk of the 50S ribosomal subunit. Interacts with L10 and the large rRNA to form the base of the stalk. L10 forms an elongated spine to which L12 dimers bind in a sequential fashion forming a multimeric L10(L12)X complex. Post-translationally, one or more lysine residues are methylated.

In terms of biological role, forms part of the ribosomal stalk which helps the ribosome interact with GTP-bound translation factors. The polypeptide is Large ribosomal subunit protein uL11 (Shewanella oneidensis (strain ATCC 700550 / JCM 31522 / CIP 106686 / LMG 19005 / NCIMB 14063 / MR-1)).